The chain runs to 294 residues: Ribosomal protein L11 methyltransferase (294 aa).

S-adenosyl-L-methionine is bound by residues T144, G165, D187, and N229.

Belongs to the methyltransferase superfamily. PrmA family.

The protein localises to the cytoplasm. It catalyses the reaction L-lysyl-[protein] + 3 S-adenosyl-L-methionine = N(6),N(6),N(6)-trimethyl-L-lysyl-[protein] + 3 S-adenosyl-L-homocysteine + 3 H(+). Methylates ribosomal protein L11. The protein is Ribosomal protein L11 methyltransferase of Pseudomonas paraeruginosa (strain DSM 24068 / PA7) (Pseudomonas aeruginosa (strain PA7)).